Consider the following 61-residue polypeptide: Small ribosomal subunit protein uS14 (61 aa).

4 residues coordinate Zn(2+): Cys24, Cys27, Cys40, and Cys43.

Belongs to the universal ribosomal protein uS14 family. Zinc-binding uS14 subfamily. As to quaternary structure, part of the 30S ribosomal subunit. Contacts proteins S3 and S10. The cofactor is Zn(2+).

Binds 16S rRNA, required for the assembly of 30S particles and may also be responsible for determining the conformation of the 16S rRNA at the A site. The chain is Small ribosomal subunit protein uS14 from Mycobacterium sp. (strain JLS).